We begin with the raw amino-acid sequence, 82 residues long: DNA-directed RNA polymerase subunit Rpo5 (82 aa).

It belongs to the archaeal Rpo5/eukaryotic RPB5 RNA polymerase subunit family. In terms of assembly, part of the RNA polymerase complex.

It localises to the cytoplasm. The enzyme catalyses RNA(n) + a ribonucleoside 5'-triphosphate = RNA(n+1) + diphosphate. DNA-dependent RNA polymerase (RNAP) catalyzes the transcription of DNA into RNA using the four ribonucleoside triphosphates as substrates. The chain is DNA-directed RNA polymerase subunit Rpo5 from Thermococcus onnurineus (strain NA1).